The chain runs to 286 residues: ATP synthase gamma chain (286 aa).

It belongs to the ATPase gamma chain family. As to quaternary structure, F-type ATPases have 2 components, CF(1) - the catalytic core - and CF(0) - the membrane proton channel. CF(1) has five subunits: alpha(3), beta(3), gamma(1), delta(1), epsilon(1). CF(0) has three main subunits: a, b and c.

It is found in the cell membrane. Functionally, produces ATP from ADP in the presence of a proton gradient across the membrane. The gamma chain is believed to be important in regulating ATPase activity and the flow of protons through the CF(0) complex. This Mycoplasma mobile (strain ATCC 43663 / 163K / NCTC 11711) (Mesomycoplasma mobile) protein is ATP synthase gamma chain.